The sequence spans 904 residues: Alanine--tRNA ligase (904 aa).

Zn(2+) is bound by residues His-584, His-588, Cys-687, and His-691.

It belongs to the class-II aminoacyl-tRNA synthetase family. It depends on Zn(2+) as a cofactor.

It localises to the cytoplasm. The enzyme catalyses tRNA(Ala) + L-alanine + ATP = L-alanyl-tRNA(Ala) + AMP + diphosphate. Its function is as follows. Catalyzes the attachment of alanine to tRNA(Ala) in a two-step reaction: alanine is first activated by ATP to form Ala-AMP and then transferred to the acceptor end of tRNA(Ala). Also edits incorrectly charged Ser-tRNA(Ala) and Gly-tRNA(Ala) via its editing domain. The polypeptide is Alanine--tRNA ligase (Mycobacterium bovis (strain ATCC BAA-935 / AF2122/97)).